We begin with the raw amino-acid sequence, 465 residues long: Adenosylhomocysteinase (465 aa).

Positions 56, 131, and 191 each coordinate substrate. Position 192 to 194 (192 to 194) interacts with NAD(+); the sequence is TTT. Substrate is bound by residues K221 and D225. NAD(+) is bound by residues N226, 255 to 260, E278, N313, 334 to 336, and N379; these read GYGDVG and IGH.

The protein belongs to the adenosylhomocysteinase family. It depends on NAD(+) as a cofactor.

The protein resides in the cytoplasm. The enzyme catalyses S-adenosyl-L-homocysteine + H2O = L-homocysteine + adenosine. The protein operates within amino-acid biosynthesis; L-homocysteine biosynthesis; L-homocysteine from S-adenosyl-L-homocysteine: step 1/1. In terms of biological role, may play a key role in the regulation of the intracellular concentration of adenosylhomocysteine. The chain is Adenosylhomocysteinase from Chelativorans sp. (strain BNC1).